The sequence spans 307 residues: MAEITAAAVKELREKSGAGMMDCKKALTETNGDMEAAVDWLRTKGLATAAKKSSRTAAEGLVGVSVEGTKGAAVEVNSETDFVAKNDQFQDFVRTVTQLALTAGDDVAALAGAGYPGGGTVAEKLTSNIATIGENQTLRRAKVVEVSKGTVVPYVHNAAVPGLGKIGVLVALEGDAPVAEMETVGKQIAMHIAAAFPQALTEDGLDPVVIERERAIAAEKAAESGKPAEIVEKMVQGAVAKFRKENALLSQVFVIDNKTPIAQVVANAAKAAGGSITLKDYVRFQLGEGIEKETSDFAAEVAAAVKG.

Residues 80-83 (TDFV) form an involved in Mg(2+) ion dislocation from EF-Tu region.

The protein belongs to the EF-Ts family.

The protein resides in the cytoplasm. Associates with the EF-Tu.GDP complex and induces the exchange of GDP to GTP. It remains bound to the aminoacyl-tRNA.EF-Tu.GTP complex up to the GTP hydrolysis stage on the ribosome. This chain is Elongation factor Ts, found in Rhizorhabdus wittichii (strain DSM 6014 / CCUG 31198 / JCM 15750 / NBRC 105917 / EY 4224 / RW1) (Sphingomonas wittichii).